We begin with the raw amino-acid sequence, 204 residues long: UPF0637 protein lwe1043 (204 aa).

This sequence belongs to the UPF0637 family.

This Listeria welshimeri serovar 6b (strain ATCC 35897 / DSM 20650 / CCUG 15529 / CIP 8149 / NCTC 11857 / SLCC 5334 / V8) protein is UPF0637 protein lwe1043.